Reading from the N-terminus, the 260-residue chain is Recombination-promoting nuclease RpnD (260 aa).

It belongs to the Rpn/YhgA-like nuclease family.

In terms of biological role, a low activity DNA endonuclease probably yielding 3'-hydroxyl ends. Involved in RecA-independent recombination and horizontal gene transfer. In Escherichia coli O157:H7, this protein is Recombination-promoting nuclease RpnD (rpnD).